Consider the following 171-residue polypeptide: Transcription antitermination protein NusB (171 aa).

It belongs to the NusB family.

In terms of biological role, involved in transcription antitermination. Required for transcription of ribosomal RNA (rRNA) genes. Binds specifically to the boxA antiterminator sequence of the ribosomal RNA (rrn) operons. This Brucella melitensis biotype 1 (strain ATCC 23456 / CCUG 17765 / NCTC 10094 / 16M) protein is Transcription antitermination protein NusB.